We begin with the raw amino-acid sequence, 140 residues long: Large ribosomal subunit protein uL16c (140 aa).

It belongs to the universal ribosomal protein uL16 family. Part of the 50S ribosomal subunit.

The protein resides in the plastid. The protein localises to the chloroplast. This chain is Large ribosomal subunit protein uL16c, found in Cyanidium caldarium (Red alga).